The primary structure comprises 430 residues: Signal recognition particle protein (430 aa).

GTP is bound by residues 105–112 (GLQGSGKT), 187–191 (DTAGR), and 245–248 (TKLD).

The protein belongs to the GTP-binding SRP family. SRP54 subfamily. Part of the signal recognition particle protein translocation system, which is composed of SRP and FtsY.

The protein localises to the cytoplasm. It carries out the reaction GTP + H2O = GDP + phosphate + H(+). In terms of biological role, involved in targeting and insertion of nascent membrane proteins into the cytoplasmic membrane. Binds to the hydrophobic signal sequence of the ribosome-nascent chain (RNC) as it emerges from the ribosomes. The SRP-RNC complex is then targeted to the cytoplasmic membrane where it interacts with the SRP receptor FtsY. In Thermus aquaticus, this protein is Signal recognition particle protein.